The primary structure comprises 91 residues: Ixochymostatin (91 aa).

Positions 1-20 are cleaved as a signal peptide; the sequence is MKTYVLQALLLTLAVAVVRA. Cystine bridges form between Cys34-Cys70, Cys43-Cys66, Cys48-Cys62, Cys53-Cys90, and Cys72-Cys84. The region spanning 34–90 is the TIL domain; that stretch reads CAEGETWKECVGSSCAELTCEHPEPSLGCTYDCNYGCYCAPDFFRNANKECVKKDKC.

Belongs to the serine protease inhibitor-like (TIL domain-containing) family. Salivary gland. Midgut.

The protein localises to the secreted. Functionally, tight-binding competitive inhibitor of chymotrypsin-like proteases; inhibits host chymase, cathepsin G (CTSG) and chymotrypsin. Inhibits chymase-mediated generation of vasoconstrictor peptides: angiotensin II and endothelin I. Reduces chymase-mediated vascular permeability and vascular endothelial-cadherin degradation. The chain is Ixochymostatin from Ixodes scapularis (Black-legged tick).